Consider the following 436-residue polypeptide: Peptidase B (436 aa).

Residues lysine 201 and aspartate 206 each coordinate Mn(2+). Residue lysine 213 is part of the active site. Positions 224, 283, and 285 each coordinate Mn(2+). The active site involves arginine 287.

The protein belongs to the peptidase M17 family. Homohexamer. It depends on Mn(2+) as a cofactor.

It is found in the cytoplasm. It carries out the reaction Release of an N-terminal amino acid, Xaa, from a peptide or arylamide. Xaa is preferably Glu or Asp but may be other amino acids, including Leu, Met, His, Cys and Gln.. In terms of biological role, probably plays an important role in intracellular peptide degradation. The sequence is that of Peptidase B from Pectobacterium carotovorum subsp. carotovorum (strain PC1).